Here is a 206-residue protein sequence, read N- to C-terminus: GTP-binding protein Rho3 (206 aa).

Position 24–31 (24–31 (GDGACGKT)) interacts with GTP. The Effector region motif lies at 46–54 (YEPTVFENY). Residues 71 to 75 (DTAGQ) and 129 to 132 (SKCD) each bind GTP. Position 203 is a cysteine methyl ester (C203). A lipid anchor (S-geranylgeranyl cysteine) is attached at C203. Residues 204 to 206 (CVM) constitute a propeptide, removed in mature form.

Belongs to the small GTPase superfamily. Rho family.

Its subcellular location is the cell membrane. The polypeptide is GTP-binding protein Rho3 (RHO3) (Schizophyllum commune (Split gill fungus)).